The following is a 404-amino-acid chain: NADH-quinone oxidoreductase subunit D 2 (404 aa).

This sequence belongs to the complex I 49 kDa subunit family. NDH-1 is composed of 14 different subunits. Subunits NuoB, C, D, E, F, and G constitute the peripheral sector of the complex.

It localises to the cell inner membrane. It carries out the reaction a quinone + NADH + 5 H(+)(in) = a quinol + NAD(+) + 4 H(+)(out). In terms of biological role, NDH-1 shuttles electrons from NADH, via FMN and iron-sulfur (Fe-S) centers, to quinones in the respiratory chain. The immediate electron acceptor for the enzyme in this species is believed to be ubiquinone. Couples the redox reaction to proton translocation (for every two electrons transferred, four hydrogen ions are translocated across the cytoplasmic membrane), and thus conserves the redox energy in a proton gradient. The sequence is that of NADH-quinone oxidoreductase subunit D 2 from Sinorhizobium medicae (strain WSM419) (Ensifer medicae).